Here is a 314-residue protein sequence, read N- to C-terminus: Protein SPOROCYTELESS (314 aa).

The segment covering 1–17 (MATSLFFMSTDQNSVGN) has biased composition (polar residues). 2 disordered regions span residues 1 to 20 (MATSLFFMSTDQNSVGNPND) and 33 to 62 (GEIRTETLKSRGRKPGSKTGQQKQKKPTLR). The SPL motif lies at 62 to 70 (RGMGVAKLE). The short motif at 308–314 (IDLSLKL) is the EAR element.

Belongs to the NOZZLE family. In terms of assembly, homodimer and heterodimer with SPEARs. Interacts in vitro with YAB1, YAB3 and YAB4. Interacts (via EAR motif) with TPL, TPR1, TPR2, TPR3 and TPR4. Interacts with SPEAR1, SPEAR2, SPEAR3, SPEAR4, TCP1, TCP6, TCP8, TCP9, TCP11, TCP15, TCP20, TCP21 and TCP23. Interacts with TCP2, TCP3, TCP4, TCP5, TCP10, TCP13, TCP17 and TCP24. Expressed in flower buds. Not found in leaves, siliques and stems. Detected in rosette leaves, stem tissue and seedlings.

The protein localises to the nucleus. Functionally, transcriptional regulator of sporocyte development. Acts as an adapter-like transcriptional repressor recruiting TPL/TPR corepressors to inhibit TCP transcription factors. Required for nucellus and embryo sac development. Plays a central role in patterning both the proximal-distal and the adaxial-abaxial axes during ovule development. Involved in establishing the prospective chalaza of the ovule and in controlling the cell number and the length of the funiculus, and is required for the development of the integuments. Required, with BEL1, for cytokinin-induced PIN1 expression in ovules. Involved in controlling stamen identity. May also regulate the morphology of lateral organs by repressing auxin production. The protein is Protein SPOROCYTELESS of Arabidopsis thaliana (Mouse-ear cress).